Reading from the N-terminus, the 487-residue chain is Probable glycine dehydrogenase (decarboxylating) subunit 2 (487 aa).

Position 273 is an N6-(pyridoxal phosphate)lysine (Lys-273).

Belongs to the GcvP family. C-terminal subunit subfamily. The glycine cleavage system is composed of four proteins: P, T, L and H. In this organism, the P 'protein' is a heterodimer of two subunits. Requires pyridoxal 5'-phosphate as cofactor.

The catalysed reaction is N(6)-[(R)-lipoyl]-L-lysyl-[glycine-cleavage complex H protein] + glycine + H(+) = N(6)-[(R)-S(8)-aminomethyldihydrolipoyl]-L-lysyl-[glycine-cleavage complex H protein] + CO2. Its function is as follows. The glycine cleavage system catalyzes the degradation of glycine. The P protein binds the alpha-amino group of glycine through its pyridoxal phosphate cofactor; CO(2) is released and the remaining methylamine moiety is then transferred to the lipoamide cofactor of the H protein. In Lysinibacillus sphaericus (strain C3-41), this protein is Probable glycine dehydrogenase (decarboxylating) subunit 2.